A 95-amino-acid polypeptide reads, in one-letter code: Large ribosomal subunit protein uL23 (95 aa).

It belongs to the universal ribosomal protein uL23 family. As to quaternary structure, part of the 50S ribosomal subunit. Contacts protein L29, and trigger factor when it is bound to the ribosome.

Its function is as follows. One of the early assembly proteins it binds 23S rRNA. One of the proteins that surrounds the polypeptide exit tunnel on the outside of the ribosome. Forms the main docking site for trigger factor binding to the ribosome. This Desulfotalea psychrophila (strain LSv54 / DSM 12343) protein is Large ribosomal subunit protein uL23.